A 414-amino-acid chain; its full sequence is Gamma-glutamyl phosphate reductase (414 aa).

It belongs to the gamma-glutamyl phosphate reductase family.

It localises to the cytoplasm. The enzyme catalyses L-glutamate 5-semialdehyde + phosphate + NADP(+) = L-glutamyl 5-phosphate + NADPH + H(+). It participates in amino-acid biosynthesis; L-proline biosynthesis; L-glutamate 5-semialdehyde from L-glutamate: step 2/2. Its function is as follows. Catalyzes the NADPH-dependent reduction of L-glutamate 5-phosphate into L-glutamate 5-semialdehyde and phosphate. The product spontaneously undergoes cyclization to form 1-pyrroline-5-carboxylate. This Xanthomonas axonopodis pv. citri (strain 306) protein is Gamma-glutamyl phosphate reductase.